The sequence spans 244 residues: uncharacterized protein (244 aa).

Positions 30–49 are disordered; it reads RETNESPKSQNPSEEATTVN. Positions 35–49 are enriched in polar residues; that stretch reads SPKSQNPSEEATTVN. A run of 4 helical transmembrane segments spans residues 96–116, 128–148, 171–191, and 194–214; these read LWGTCVILSTLFWSYYVLSNS, LLFILIIALDALLTVSLFGLF, GFFINVLSTMVQALVTVTIAF, and FVTIDFPIYVFSSLFLYHPLS. Residues 224 to 244 are disordered; sequence QLDGSGERKTDSSLVHQNPPN. Positions 235-244 are enriched in polar residues; that stretch reads SSLVHQNPPN.

The protein localises to the nucleus membrane. This is an uncharacterized protein from Schizosaccharomyces pombe (strain 972 / ATCC 24843) (Fission yeast).